The primary structure comprises 207 residues: ATP-dependent Clp protease proteolytic subunit (207 aa).

S111 serves as the catalytic Nucleophile. H136 is an active-site residue.

Belongs to the peptidase S14 family. Fourteen ClpP subunits assemble into 2 heptameric rings which stack back to back to give a disk-like structure with a central cavity, resembling the structure of eukaryotic proteasomes.

It is found in the cytoplasm. It catalyses the reaction Hydrolysis of proteins to small peptides in the presence of ATP and magnesium. alpha-casein is the usual test substrate. In the absence of ATP, only oligopeptides shorter than five residues are hydrolyzed (such as succinyl-Leu-Tyr-|-NHMec, and Leu-Tyr-Leu-|-Tyr-Trp, in which cleavage of the -Tyr-|-Leu- and -Tyr-|-Trp bonds also occurs).. Its function is as follows. Cleaves peptides in various proteins in a process that requires ATP hydrolysis. Has a chymotrypsin-like activity. Plays a major role in the degradation of misfolded proteins. This is ATP-dependent Clp protease proteolytic subunit from Burkholderia mallei (strain ATCC 23344).